A 162-amino-acid polypeptide reads, in one-letter code: Shikimate kinase (162 aa).

Position 11–16 (11–16) interacts with ATP; the sequence is GSGKSS. S15 is a binding site for Mg(2+). Substrate is bound by residues D33, R57, and G80. Position 116 (R116) interacts with ATP. A substrate-binding site is contributed by R132.

Belongs to the shikimate kinase family. Monomer. Requires Mg(2+) as cofactor.

Its subcellular location is the cytoplasm. It catalyses the reaction shikimate + ATP = 3-phosphoshikimate + ADP + H(+). Its pathway is metabolic intermediate biosynthesis; chorismate biosynthesis; chorismate from D-erythrose 4-phosphate and phosphoenolpyruvate: step 5/7. Functionally, catalyzes the specific phosphorylation of the 3-hydroxyl group of shikimic acid using ATP as a cosubstrate. This is Shikimate kinase from Helicobacter pylori (strain Shi470).